We begin with the raw amino-acid sequence, 46 residues long: Myoregulin (46 aa).

The Cytoplasmic portion of the chain corresponds to 1–21 (MSGKSWVLISTTSPQSLEDEI). Residues 22–42 (LGRLLKILFVLFVDLMSIMYV) form a helical membrane-spanning segment. The Lumenal segment spans residues 43 to 46 (VITS).

Homooligomer. Monomer. Interacts with ATP2A1/SERCA1. Interacts as a monomer with ATP2A2/SERCA2; the interaction inhibits ATP2A2 activity. In terms of tissue distribution, specifically expressed in all skeletal muscles. Detected in both fast- and slow-type skeletal muscle. Not expressed in cardiac or smooth muscles.

Its subcellular location is the sarcoplasmic reticulum membrane. Functionally, inhibits the activity of ATP2A1/SERCA1 ATPase in sarcoplasmic reticulum by decreasing the apparent affinity of the ATPase for Ca(2+), thereby acting as a key regulator of skeletal muscle activity. Its high expression in adult skeletal muscle, suggests that it constitutes the predominant regulator of ATP2A1/SERCA1 in adult skeletal muscle. Also inhibits the activity of ATP2A2/SERCA2 and ATP2A3/SERCA3. The sequence is that of Myoregulin from Mus musculus (Mouse).